The chain runs to 569 residues: ATP-dependent RNA helicase dhh1 (569 aa).

Positions 1–16 are enriched in polar residues; sequence MSDQLADQLKATSLSS. A disordered region spans residues 1–39; it reads MSDQLADQLKATSLSSGPEDWKKGLNLPARDTRQQTEDV. The Q motif signature appears at 45–73; the sequence is LDWEDFIHDRDLLMGIFEAGFEKPSPIQE. The Helicase ATP-binding domain occupies 76–246; sequence IPVALTGRDI…DKNMTSPYEI (171 aa). 89-96 serves as a coordination point for ATP; sequence AKNGTGKT. Residues 194 to 197 carry the DEAD box motif; the sequence is DEAD. Residues 256 to 416 form the Helicase C-terminal domain; it reads GITQYYAFVE…PIPQTIDKSL (161 aa). The tract at residues 436-569 is disordered; that stretch reads AQQPQQQLQQ…GQPQGPLSAQ (134 aa). Positions 437 to 482 are enriched in low complexity; that stretch reads QQPQQQLQQSQRPQQSQQQQHFSTQTQPSNQLPPQQGNQQLGFNPQ. Residues 495–520 show a composition bias toward polar residues; it reads GDWQGQNGRQNGTGASNNQPRPTNYQ. Residues 529–542 show a composition bias toward gly residues; that stretch reads SRGGRGRGFQGQGG. Residues 543 to 569 show a composition bias toward low complexity; that stretch reads RQNQNYGGQRGPRTQGQGQPQGPLSAQ.

It belongs to the DEAD box helicase family. DDX6/DHH1 subfamily.

Its subcellular location is the cytoplasm. It is found in the P-body. The catalysed reaction is ATP + H2O = ADP + phosphate + H(+). In terms of biological role, ATP-dependent RNA helicase involved in mRNA turnover, and more specifically in mRNA decapping. Is involved in G1/S DNA-damage checkpoint recovery, probably through the regulation of the translational status of a subset of mRNAs. May also have a role in translation and mRNA nuclear export. The protein is ATP-dependent RNA helicase dhh1 (drh-10) of Neurospora crassa (strain ATCC 24698 / 74-OR23-1A / CBS 708.71 / DSM 1257 / FGSC 987).